We begin with the raw amino-acid sequence, 171 residues long: Neuronal vesicle trafficking-associated protein 2 (171 aa).

Over residues 1-10 (MVKLNSNPSE) the composition is skewed to polar residues. The interval 1–21 (MVKLNSNPSEKGTKPPSVEDG) is disordered. The Cytoplasmic segment spans residues 1 to 71 (MVKLNSNPSE…FRVPKIAEFT (71 aa)). Residues 72–92 (VTILVSLALAFLACIVFLVVY) traverse the membrane as a helical; Signal-anchor for type II membrane protein segment. The Lumenal segment spans residues 93–171 (KAFTYDHSCP…EPKPPKTQGH (79 aa)).

It belongs to the NSG family.

The protein resides in the membrane. Its subcellular location is the golgi apparatus. It localises to the trans-Golgi network membrane. The protein localises to the cell projection. It is found in the dendrite. The protein resides in the endosome membrane. Its subcellular location is the early endosome membrane. It localises to the late endosome membrane. The protein localises to the lysosome lumen. It is found in the cytoplasmic vesicle membrane. The protein resides in the golgi stack membrane. Its subcellular location is the endosome. It localises to the multivesicular body membrane. In Homo sapiens (Human), this protein is Neuronal vesicle trafficking-associated protein 2.